The sequence spans 453 residues: GTPase Der (453 aa).

2 consecutive EngA-type G domains span residues 3–167 and 187–360; these read PIIV…ISEK and IKVA…EDSK. Residues 9–16, 57–61, 119–122, 193–200, 240–244, and 305–308 contribute to the GTP site; these read GRTNVGKS, DTAGL, NKID, GRPNVGKS, DTAGA, and NKCD. Residues 361 to 445 enclose the KH-like domain; that stretch reads RKISTSTLIR…PIQIQFKDNE (85 aa).

It belongs to the TRAFAC class TrmE-Era-EngA-EngB-Septin-like GTPase superfamily. EngA (Der) GTPase family. In terms of assembly, associates with the 50S ribosomal subunit.

In terms of biological role, GTPase that plays an essential role in the late steps of ribosome biogenesis. In Buchnera aphidicola subsp. Acyrthosiphon pisum (strain Tuc7), this protein is GTPase Der.